A 255-amino-acid polypeptide reads, in one-letter code: Alpha-acetolactate decarboxylase (255 aa).

This sequence belongs to the alpha-acetolactate decarboxylase family.

The enzyme catalyses (2S)-2-acetolactate + H(+) = (R)-acetoin + CO2. It functions in the pathway polyol metabolism; (R,R)-butane-2,3-diol biosynthesis; (R,R)-butane-2,3-diol from pyruvate: step 2/3. Converts acetolactate into acetoin, which can be excreted by the cells. This may be a mechanism for controlling the internal pH of cells in the stationary stage. This chain is Alpha-acetolactate decarboxylase (alsD), found in Bacillus subtilis (strain 168).